We begin with the raw amino-acid sequence, 373 residues long: Dual-specificity RNA methyltransferase RlmN (373 aa).

The active-site Proton acceptor is Glu-101. Residues 107-350 (ENKRTTLCVS…TIIRKIRGAD (244 aa)) enclose the Radical SAM core domain. Residues Cys-114 and Cys-355 are joined by a disulfide bond. [4Fe-4S] cluster-binding residues include Cys-121, Cys-125, and Cys-128. S-adenosyl-L-methionine is bound by residues 179–180 (GE), Ser-211, 233–235 (SLH), and Asn-312. Cys-355 acts as the S-methylcysteine intermediate in catalysis.

It belongs to the radical SAM superfamily. RlmN family. It depends on [4Fe-4S] cluster as a cofactor.

The protein resides in the cytoplasm. It carries out the reaction adenosine(2503) in 23S rRNA + 2 reduced [2Fe-2S]-[ferredoxin] + 2 S-adenosyl-L-methionine = 2-methyladenosine(2503) in 23S rRNA + 5'-deoxyadenosine + L-methionine + 2 oxidized [2Fe-2S]-[ferredoxin] + S-adenosyl-L-homocysteine. It catalyses the reaction adenosine(37) in tRNA + 2 reduced [2Fe-2S]-[ferredoxin] + 2 S-adenosyl-L-methionine = 2-methyladenosine(37) in tRNA + 5'-deoxyadenosine + L-methionine + 2 oxidized [2Fe-2S]-[ferredoxin] + S-adenosyl-L-homocysteine. In terms of biological role, specifically methylates position 2 of adenine 2503 in 23S rRNA and position 2 of adenine 37 in tRNAs. m2A2503 modification seems to play a crucial role in the proofreading step occurring at the peptidyl transferase center and thus would serve to optimize ribosomal fidelity. This is Dual-specificity RNA methyltransferase RlmN from Blochmanniella pennsylvanica (strain BPEN).